The chain runs to 471 residues: uncharacterized protein (471 aa).

The next 12 membrane-spanning stretches (helical) occupy residues 48 to 68 (FISA…FTIV), 85 to 105 (LSGV…YPML), 123 to 140 (YTMS…YALA), 145 to 165 (SVAL…MFLY), 186 to 206 (VVNS…GGLM), 223 to 243 (SGNW…FACF), 277 to 297 (FVGC…YFLL), 320 to 340 (GNFL…FSYL), 349 to 369 (IILL…TIHY), 379 to 399 (FIIY…SVSL), 414 to 434 (VAVQ…GGAF), and 440 to 460 (VVFF…LLII).

The protein belongs to the major facilitator superfamily.

Its subcellular location is the golgi apparatus. It is found in the membrane. This is an uncharacterized protein from Schizosaccharomyces pombe (strain 972 / ATCC 24843) (Fission yeast).